The sequence spans 416 residues: UDP-N-acetylmuramoylalanine--D-glutamate ligase (416 aa).

108 to 114 (GTTGKTT) serves as a coordination point for ATP.

Belongs to the MurCDEF family.

Its subcellular location is the cytoplasm. It carries out the reaction UDP-N-acetyl-alpha-D-muramoyl-L-alanine + D-glutamate + ATP = UDP-N-acetyl-alpha-D-muramoyl-L-alanyl-D-glutamate + ADP + phosphate + H(+). Its pathway is cell wall biogenesis; peptidoglycan biosynthesis. Cell wall formation. Catalyzes the addition of glutamate to the nucleotide precursor UDP-N-acetylmuramoyl-L-alanine (UMA). This Chlamydia trachomatis serovar L2b (strain UCH-1/proctitis) protein is UDP-N-acetylmuramoylalanine--D-glutamate ligase.